The primary structure comprises 500 residues: NAD(P)H-quinone oxidoreductase chain 4, chloroplastic (500 aa).

Helical transmembrane passes span 4–24, 35–55, 87–107, 113–130, 134–154, 167–187, 207–227, 242–262, 272–292, 305–325, 330–350, 386–406, 416–436, and 462–482; these read FPWL…IFFL, YTIC…CYHF, IGPV…AWPV, LFHF…GSFS, LLLF…LLSM, FILY…GVGL, VALE…KLPI, HYST…YGLI, AHSI…IYAA, IAYS…SITD, GAIL…FLAG, LALP…GIIT, IVIT…LLSM, and LFVS…PDFV.

Belongs to the complex I subunit 4 family.

The protein resides in the plastid. It localises to the chloroplast thylakoid membrane. It carries out the reaction a plastoquinone + NADH + (n+1) H(+)(in) = a plastoquinol + NAD(+) + n H(+)(out). The catalysed reaction is a plastoquinone + NADPH + (n+1) H(+)(in) = a plastoquinol + NADP(+) + n H(+)(out). This chain is NAD(P)H-quinone oxidoreductase chain 4, chloroplastic, found in Guizotia abyssinica (Niger).